The following is a 278-amino-acid chain: Shikimate dehydrogenase (NADP(+)) (278 aa).

Shikimate-binding positions include Ser-18–Ser-20 and Thr-65. Lys-69 serves as the catalytic Proton acceptor. Glu-80 contributes to the NADP(+) binding site. Shikimate-binding residues include Asn-89 and Asp-104. NADP(+)-binding positions include Gly-129 to Ser-133 and Leu-218. Tyr-220 lines the shikimate pocket. Gly-241 provides a ligand contact to NADP(+).

The protein belongs to the shikimate dehydrogenase family. In terms of assembly, homodimer.

The catalysed reaction is shikimate + NADP(+) = 3-dehydroshikimate + NADPH + H(+). It functions in the pathway metabolic intermediate biosynthesis; chorismate biosynthesis; chorismate from D-erythrose 4-phosphate and phosphoenolpyruvate: step 4/7. Functionally, involved in the biosynthesis of the chorismate, which leads to the biosynthesis of aromatic amino acids. Catalyzes the reversible NADPH linked reduction of 3-dehydroshikimate (DHSA) to yield shikimate (SA). The chain is Shikimate dehydrogenase (NADP(+)) from Rhodopseudomonas palustris (strain TIE-1).